Here is a 954-residue protein sequence, read N- to C-terminus: DNA repair and telomere maintenance protein NBS1 (954 aa).

The FHA domain maps to 22–85 (YLFGRTVAEA…KGTLVNGVQI (64 aa)). BRCT domains lie at 107-186 (TLKI…NAIV) and 244-349 (GYTF…LEAI). Positions 368–377 (VSVSASVEPQ) are enriched in polar residues. Disordered regions lie at residues 368 to 431 (VSVS…FKGF), 444 to 506 (QAQS…PLPE), 528 to 580 (IEAG…KQED), 630 to 654 (VRQP…WDPR), and 692 to 954 (GIGD…GRRR). Basic and acidic residues predominate over residues 378–393 (SSEKVRPAVEDRKEVE). Over residues 416–428 (PHRRERRTGRSRF) the composition is skewed to basic residues. The segment covering 458–471 (PSASQDSLFVSQRE) has biased composition (polar residues). The segment covering 541 to 554 (PEPEREDEDVEMVE) has biased composition (acidic residues). Basic and acidic residues-rich tracts occupy residues 640–654 (RTRE…WDPR) and 704–715 (GRVPRRPKETQT). Residues 726–737 (DGSGFAAAAASG) are compositionally biased toward low complexity. Over residues 738-751 (KGKEKDKENEKEVG) the composition is skewed to basic and acidic residues. Low complexity-rich tracts occupy residues 801-815 (EVVS…ASEP) and 826-842 (RANA…SQTQ). Acidic residues predominate over residues 936-945 (GSEEESEDDE).

It belongs to the Nibrin family. Component of the MRN complex composed of two heterodimers RAD50 and MRE11 associated with a single NBS1.

The protein localises to the nucleus. It is found in the chromosome. In terms of biological role, component of the MRN complex, which plays a central role in double-strand break (DSB) repair, DNA recombination, maintenance of telomere integrity and meiosis. The MRN complex is involved in the repair of DNA double-strand breaks (DSBs) via homologous recombination (HR), an error-free mechanism which primarily occurs during S and G2 phases. The complex (1) mediates the end resection of damaged DNA, which generates proper single-stranded DNA, a key initial steps in HR, and is (2) required for the recruitment of other repair factors and efficient activation of ATM and ATR upon DNA damage. The MRN complex possesses single-strand endonuclease activity and double-strand-specific 3'-5' exonuclease activity, which are provided by MRE11, to initiate end resection, which is required for single-strand invasion and recombination. Within the MRN complex, NBS1 acts as a protein-protein adapter, which specifically recognizes and binds phosphorylated proteins, promoting their recruitment to DNA damage sites. Recruits MRE11 and RAD50 components of the MRN complex to DSBs in response to DNA damage. This chain is DNA repair and telomere maintenance protein NBS1, found in Chaetomium thermophilum (strain DSM 1495 / CBS 144.50 / IMI 039719) (Thermochaetoides thermophila).